We begin with the raw amino-acid sequence, 119 residues long: Ribosome-binding factor A (119 aa).

The protein belongs to the RbfA family. Monomer. Binds 30S ribosomal subunits, but not 50S ribosomal subunits or 70S ribosomes.

It is found in the cytoplasm. Functionally, one of several proteins that assist in the late maturation steps of the functional core of the 30S ribosomal subunit. Associates with free 30S ribosomal subunits (but not with 30S subunits that are part of 70S ribosomes or polysomes). Required for efficient processing of 16S rRNA. May interact with the 5'-terminal helix region of 16S rRNA. The chain is Ribosome-binding factor A from Lactococcus lactis subsp. cremoris (strain SK11).